Consider the following 443-residue polypeptide: F-box only protein 39 (443 aa).

The 46-residue stretch at 16–61 folds into the F-box domain; that stretch reads WATLPDVCLRRVFWWLGDRDRSRAALVCRKWNQMMYSADLWRYRTI.

As to quaternary structure, directly interacts with SKP1 and CUL1.

Substrate-recognition component of the SCF (SKP1-CUL1-F-box protein)-type E3 ubiquitin ligase complex. This Bos taurus (Bovine) protein is F-box only protein 39 (FBXO39).